The sequence spans 341 residues: Glucokinase (341 aa).

18–23 is a binding site for ATP; the sequence is GDIGGT.

Belongs to the bacterial glucokinase family.

Its subcellular location is the cytoplasm. The catalysed reaction is D-glucose + ATP = D-glucose 6-phosphate + ADP + H(+). The sequence is that of Glucokinase from Rhizobium leguminosarum bv. trifolii (strain WSM2304).